A 248-amino-acid polypeptide reads, in one-letter code: Cobalt transport protein CbiM (248 aa).

The signal sequence occupies residues 1–29; the sequence is MKRVSVKNYLVCLLIAVCAIFVFPANASA. The next 6 helical transmembrane spans lie at 40–60, 72–92, 104–124, 136–156, 167–187, and 210–230; these read GWCI…FFSI, TLLA…MPSV, LGAV…ILLF, TLGA…FGVF, GLAV…ITSV, and IFGF…VVIY.

Belongs to the CbiM family. As to quaternary structure, forms an energy-coupling factor (ECF) transporter complex composed of an ATP-binding protein (A component, CbiO), a transmembrane protein (T component, CbiQ) and 2 possible substrate-capture proteins (S components, CbiM and CbiN) of unknown stoichimetry.

Its subcellular location is the cell membrane. It participates in cofactor biosynthesis; adenosylcobalamin biosynthesis. Functionally, part of the energy-coupling factor (ECF) transporter complex CbiMNOQ involved in cobalt import. This Ruminiclostridium cellulolyticum (strain ATCC 35319 / DSM 5812 / JCM 6584 / H10) (Clostridium cellulolyticum) protein is Cobalt transport protein CbiM.